Here is a 525-residue protein sequence, read N- to C-terminus: Mitoguardin (525 aa).

The helical transmembrane segment at 26-45 (VVLFSLTAGVALMSVLSRFL) threads the bilayer. Basic residues predominate over residues 47-67 (RRKPPRPPRRARKYTGRRNRN). Disordered stretches follow at residues 47–73 (RRKPPRPPRRARKYTGRRNRNSMRSPN) and 210–239 (DEAEEEAGEADDDRRSRKSGSVLSRAGSDP). A compositionally biased stretch (acidic residues) spans 211-220 (EAEEEAGEAD).

This sequence belongs to the mitoguardin family. As to quaternary structure, interacts with zuc.

It is found in the mitochondrion outer membrane. Regulator of mitochondrial fusion required to maintain neuronal homeostasis. The sequence is that of Mitoguardin from Drosophila melanogaster (Fruit fly).